The sequence spans 239 residues: 4-hydroxy-tetrahydrodipicolinate reductase (239 aa).

NAD(+) contacts are provided by residues Asp32, 73 to 75, and 98 to 101; these read GTT and ASNF. His133 (proton donor/acceptor) is an active-site residue. Residue His134 participates in (S)-2,3,4,5-tetrahydrodipicolinate binding. The Proton donor role is filled by Lys137. Residue 143 to 144 coordinates (S)-2,3,4,5-tetrahydrodipicolinate; that stretch reads GT.

The protein belongs to the DapB family.

It is found in the cytoplasm. The catalysed reaction is (S)-2,3,4,5-tetrahydrodipicolinate + NAD(+) + H2O = (2S,4S)-4-hydroxy-2,3,4,5-tetrahydrodipicolinate + NADH + H(+). It carries out the reaction (S)-2,3,4,5-tetrahydrodipicolinate + NADP(+) + H2O = (2S,4S)-4-hydroxy-2,3,4,5-tetrahydrodipicolinate + NADPH + H(+). It functions in the pathway amino-acid biosynthesis; L-lysine biosynthesis via DAP pathway; (S)-tetrahydrodipicolinate from L-aspartate: step 4/4. Catalyzes the conversion of 4-hydroxy-tetrahydrodipicolinate (HTPA) to tetrahydrodipicolinate. The chain is 4-hydroxy-tetrahydrodipicolinate reductase from Christiangramia forsetii (strain DSM 17595 / CGMCC 1.15422 / KT0803) (Gramella forsetii).